We begin with the raw amino-acid sequence, 309 residues long: Elongation factor Ts (309 aa).

An involved in Mg(2+) ion dislocation from EF-Tu region spans residues 82 to 85 (TDFV).

It belongs to the EF-Ts family.

Its subcellular location is the cytoplasm. Associates with the EF-Tu.GDP complex and induces the exchange of GDP to GTP. It remains bound to the aminoacyl-tRNA.EF-Tu.GTP complex up to the GTP hydrolysis stage on the ribosome. The chain is Elongation factor Ts from Rickettsia peacockii (strain Rustic).